Reading from the N-terminus, the 239-residue chain is Transmembrane emp24 domain-containing protein 6 (239 aa).

Residues 1 to 21 (MFPLLLVAELVVLSLVTSVKS) form the signal peptide. Over 22 to 200 (QETDPLHGSK…FFLLQSNYTY (179 aa)) the chain is Lumenal. In terms of domain architecture, GOLD spans 53–138 (IECFWQFADQ…SIQVYLNFGV (86 aa)). N-linked (GlcNAc...) asparagine glycosylation is found at Asn156 and Asn197. Residues 201 to 223 (VNWWSTAQSLAIVLSGALQLYFL) form a helical membrane-spanning segment. Residues 224–239 (KRLFTASTTDTKKPRC) lie on the Cytoplasmic side of the membrane.

The protein belongs to the EMP24/GP25L family.

It localises to the endoplasmic reticulum membrane. The chain is Transmembrane emp24 domain-containing protein 6 (Tmed6) from Mus musculus (Mouse).